Reading from the N-terminus, the 193-residue chain is Chaperone protein TorD (193 aa).

The protein belongs to the TorD/DmsD family. TorD subfamily.

Its subcellular location is the cytoplasm. Involved in the biogenesis of TorA. Acts on TorA before the insertion of the molybdenum cofactor and, as a result, probably favors a conformation of the apoenzyme that is competent for acquiring the cofactor. The chain is Chaperone protein TorD from Histophilus somni (strain 129Pt) (Haemophilus somnus).